Reading from the N-terminus, the 434-residue chain is Adenylosuccinate synthetase (434 aa).

GTP-binding positions include 22–28 (GDEGKGK) and 50–52 (GHT). Catalysis depends on D23, which acts as the Proton acceptor. Positions 23 and 50 each coordinate Mg(2+). IMP-binding positions include 23–26 (DEGK), 48–51 (NAGH), T139, R153, Q234, T249, and R313. H51 acts as the Proton donor in catalysis. 309–315 (ATTGRKR) serves as a coordination point for substrate. GTP contacts are provided by residues R315, 341–343 (KLD), and 423–425 (SVG).

It belongs to the adenylosuccinate synthetase family. Homodimer. Requires Mg(2+) as cofactor.

The protein localises to the cytoplasm. The enzyme catalyses IMP + L-aspartate + GTP = N(6)-(1,2-dicarboxyethyl)-AMP + GDP + phosphate + 2 H(+). Its pathway is purine metabolism; AMP biosynthesis via de novo pathway; AMP from IMP: step 1/2. Its function is as follows. Plays an important role in the de novo pathway of purine nucleotide biosynthesis. Catalyzes the first committed step in the biosynthesis of AMP from IMP. The protein is Adenylosuccinate synthetase of Chlorobium limicola (strain DSM 245 / NBRC 103803 / 6330).